A 1414-amino-acid chain; its full sequence is DNA-directed RNA polymerase subunit beta' (1414 aa).

Residues Cys-70, Cys-72, Cys-85, and Cys-88 each contribute to the Zn(2+) site. Mg(2+) contacts are provided by Asp-460, Asp-462, and Asp-464. 4 residues coordinate Zn(2+): Cys-814, Cys-888, Cys-895, and Cys-898. Low complexity predominate over residues 1392 to 1403; the sequence is EQALSEALKSSA. A disordered region spans residues 1392-1414; it reads EQALSEALKSSAPQEAKAAQKDE.

The protein belongs to the RNA polymerase beta' chain family. The RNAP catalytic core consists of 2 alpha, 1 beta, 1 beta' and 1 omega subunit. When a sigma factor is associated with the core the holoenzyme is formed, which can initiate transcription. Mg(2+) is required as a cofactor. Requires Zn(2+) as cofactor.

The catalysed reaction is RNA(n) + a ribonucleoside 5'-triphosphate = RNA(n+1) + diphosphate. DNA-dependent RNA polymerase catalyzes the transcription of DNA into RNA using the four ribonucleoside triphosphates as substrates. This is DNA-directed RNA polymerase subunit beta' from Coxiella burnetii (strain Dugway 5J108-111).